Consider the following 776-residue polypeptide: Transferrin receptor protein 1 (776 aa).

The Cytoplasmic segment spans residues 1 to 70 (MDHARAALSN…QPQRNGKRLC (70 aa)). The Endocytosis signal motif lies at 19 to 22 (YTRF). At Ser23 the chain carries Phosphoserine. A lipid anchor (S-palmitoyl cysteine) is attached at Cys70. A helical; Signal-anchor for type II membrane protein membrane pass occupies residues 71 to 91 (FLVIAAVLLLLIGFLIGYLSY). Residues 92-776 (RGRIELAARC…GDIWETDNEF (685 aa)) lie on the Extracellular side of the membrane. One can recognise a PA domain in the interval 230-322 (SESGSVSGKP…GTGDPYTPGF (93 aa)). N-linked (GlcNAc...) asparagine glycosylation is found at Asn261, Asn326, and Asn391. The ligand-binding stretch occupies residues 586 to 776 (KGDTLENLRK…GDIWETDNEF (191 aa)). Residues 662 to 664 (RGD) carry the Cell attachment site motif. Asn738 carries an N-linked (GlcNAc...) asparagine glycan.

This sequence belongs to the peptidase M28 family. M28B subfamily. Homodimer; disulfide-linked. Binds one transferrin molecule per subunit. Stearoylated. Stearoylation does not affect iron uptake. Post-translationally, N- and O-glycosylated, phosphorylated and palmitoylated.

It localises to the cell membrane. It is found in the melanosome. In terms of biological role, cellular uptake of iron occurs via receptor-mediated endocytosis of ligand-occupied transferrin receptor into specialized endosomes. Endosomal acidification leads to iron release. The apotransferrin-receptor complex is then recycled to the cell surface with a return to neutral pH and the concomitant loss of affinity of apotransferrin for its receptor. Transferrin receptor is necessary for development of erythrocytes and the nervous system. Acts as a lipid sensor that regulates mitochondrial fusion by regulating activation of the JNK pathway. When dietary levels of stearate (C18:0) are low, promotes activation of the JNK pathway, resulting in HUWE1-mediated ubiquitination and subsequent degradation of the mitofusin MFN2 and inhibition of mitochondrial fusion. When dietary levels of stearate (C18:0) are high, TFRC stearoylation inhibits activation of the JNK pathway and thus degradation of the mitofusin MFN2. Mediates uptake of NICOL1 into fibroblasts where it may regulate extracellular matrix production. This is Transferrin receptor protein 1 (TFRC) from Gallus gallus (Chicken).